The primary structure comprises 347 residues: Cell division protein FtsQ (347 aa).

The disordered stretch occupies residues 1–55 (MARNGNPQFPDERSTATRAKATEPEELDDRFSDLEPEEDSPFLRSQKRVPVRRGP). Residues 1–66 (MARNGNPQFP…PSKKAANRVK (66 aa)) are Cytoplasmic-facing. Positions 10 to 33 (PDERSTATRAKATEPEELDDRFSD) are enriched in basic and acidic residues. The chain crosses the membrane as a helical span at residues 67-87 (IALIVLGVLVVIGGVWMALSA). At 88–347 (YGEHSWRFRL…PTAHTSGRRH (260 aa)) the chain is on the periplasmic side. Residues 98-166 (ESSDSIEVGG…DRIRVQVTER (69 aa)) form the POTRA domain. Residues 308–347 (DSHPSAAKPTAPAVAPAVEKPAVAKPAVAKPTAHTSGRRH) are disordered. Residues 313 to 340 (AAKPTAPAVAPAVEKPAVAKPAVAKPTA) show a composition bias toward low complexity.

Belongs to the FtsQ/DivIB family. FtsQ subfamily.

It is found in the cell inner membrane. Its function is as follows. Essential cell division protein. This Koribacter versatilis (strain Ellin345) protein is Cell division protein FtsQ.